A 354-amino-acid polypeptide reads, in one-letter code: Homer protein homolog 1 (354 aa).

Residues 1 to 110 (MGEQPIFSTR…EKFQEFKEAA (110 aa)) enclose the WH1 domain. An N-acetylglycine modification is found at Gly-2. Residues 114 to 173 (KEKSQEKMELTSTPSQESAGGDLQSPLTPESINGTDDERTPDVTQNSEPRAEPTQNALPF) form a disordered region. Polar residues-rich tracts occupy residues 138–147 (SPLTPESING) and 155–173 (DVTQ…ALPF). A coiled-coil region spans residues 181 to 352 (KHWEAELATL…LRDNLAKLLE (172 aa)). A required for tetramerization region spans residues 290 to 354 (KLQEVEIRNK…DNLAKLLECS (65 aa)). The residue at position 306 (Ser-306) is a Phosphoserine.

Belongs to the Homer family. In terms of assembly, tetramer; this tetrameric structure is critical for forming the high-order complex with SHANK1, which in turn is necessary for the structural and functional integrity of dendritic spines. Interacts with GRM1, GRM5, ITPR1, DNM3, RYR1, RYR2 and SHANK3. Interacts with IFT57 and OPHN1. Isoform 1 encodes a coiled-coil structure that mediates homo- and heteromultimerization. Interacts with SHANK1; forms high-order polymerized complex with a mesh-like network structure, at least composed of SHANK1, HOMER1 and DLGAP1; the complex formation is SHANK1 multimerization dependent. Interacts with NFATC4. Interacts with DAGLA (via PPXXF motif); this interaction is required for the cell membrane localization of DAGLA. Interacts with SRGAP2.

Its subcellular location is the cytoplasm. It localises to the postsynaptic density. It is found in the synapse. The protein localises to the cell projection. The protein resides in the dendritic spine. Its function is as follows. Postsynaptic density scaffolding protein. Binds and cross-links cytoplasmic regions of GRM1, GRM5, ITPR1, DNM3, RYR1, RYR2, SHANK1 and SHANK3. By physically linking GRM1 and GRM5 with ER-associated ITPR1 receptors, it aids the coupling of surface receptors to intracellular calcium release. May also couple GRM1 to PI3 kinase through its interaction with AGAP2. Isoform 1 regulates the trafficking and surface expression of GRM5. Isoform 3 acts as a natural dominant negative, in dynamic competition with constitutively expressed isoform 1 to regulate synaptic metabotropic glutamate function. Isoform 3, may be involved in the structural changes that occur at synapses during long-lasting neuronal plasticity and development. Forms a high-order complex with SHANK1, which in turn is necessary for the structural and functional integrity of dendritic spines. Negatively regulates T cell activation by inhibiting the calcineurin-NFAT pathway. Acts by competing with calcineurin/PPP3CA for NFAT protein binding, hence preventing NFAT activation by PPP3CA. The polypeptide is Homer protein homolog 1 (Homo sapiens (Human)).